A 546-amino-acid chain; its full sequence is Metal transporter Nramp6.2 (546 aa).

Helical transmembrane passes span 50 to 70 (FLPY…PGNL), 83 to 103 (ELLW…SLAA), 128 to 150 (SLWL…GTAF), 154 to 176 (ILFH…LLLG), 187 to 207 (LLIS…LSYV), 233 to 253 (IALL…ALVL), 270 to 290 (YFLI…VSII), and 333 to 353 (IYAI…TYAG). Asparagine 371 carries N-linked (GlcNAc...) asparagine glycosylation. The next 4 helical transmembrane spans lie at 374–394 (TRCI…SSGA), 397–417 (LIII…IPLL), 433–453 (IYII…NVYY), and 473–493 (VIIG…IIYL).

Belongs to the NRAMP (TC 2.A.55) family.

It localises to the membrane. Functionally, probable divalent metal transporter. This is Metal transporter Nramp6.2 from Populus trichocarpa (Western balsam poplar).